An 874-amino-acid chain; its full sequence is Cellulose synthase catalytic subunit [UDP-forming] (874 aa).

Transmembrane regions (helical) follow at residues 30–50, 151–171, 173–193, and 230–250; these read SPFSAALGCLWTILAWIVFPL, ILGVIVTFSLILALICITQPF, PLSQFIFLLLLWGVALLVRRM, and LVCGLILLFAETYAWIVLVLG. The catalytic subdomain A stretch occupies residues 271–364; sequence QWPTVDIFVP…FVAIFDCDHV (94 aa). Residue aspartate 313 is part of the active site. Substrate contacts are provided by aspartate 360 and aspartate 362. Positions 441-501 are catalytic subdomain B; that stretch reads KPLDEIGGIA…GQRIRWARGM (61 aa). Aspartate 457 is a catalytic residue. 5 helical membrane-spanning segments follow: residues 525 to 545, 547 to 567, 592 to 612, 634 to 654, and 668 to 688; these read LNAMFHFLSGIPRLIFLTAPL, FLLLHAYIIYAPALMIALFVI, IYETVLAWYIAPPTLVALINP, VISRPYIFLVLLNLLGVAAGV, and VIVSLVWVFYNLVILGGAVAV. The PilZ domain maps to 694-790; it reads QVRRAHRVEI…QHIDFVQCTF (97 aa). Residues 833 to 853 traverse the membrane as a helical segment; it reads SVKVIFRSLTALIAWIVSFIP.

Belongs to the glycosyltransferase 2 family. It depends on Mg(2+) as a cofactor.

It localises to the cell inner membrane. It catalyses the reaction [(1-&gt;4)-beta-D-glucosyl](n) + UDP-alpha-D-glucose = [(1-&gt;4)-beta-D-glucosyl](n+1) + UDP + H(+). Its pathway is glycan metabolism; bacterial cellulose biosynthesis. Its activity is regulated as follows. Activated by bis-(3'-5') cyclic diguanylic acid (c-di-GMP). Functionally, catalytic subunit of cellulose synthase. It polymerizes uridine 5'-diphosphate glucose to cellulose, which is produced as an extracellular component for mechanical and chemical protection at the onset of the stationary phase, when the cells exhibit multicellular behavior (rdar morphotype). Coexpression of cellulose and thin aggregative fimbriae leads to a hydrophobic network with tightly packed cells embedded in a highly inert matrix. This is Cellulose synthase catalytic subunit [UDP-forming] (bcsA) from Salmonella typhi.